The following is a 289-amino-acid chain: Phospholipase A1 (289 aa).

Residues 1–20 (MRTGPGWLLAAAALPFFACA) form the signal peptide. At 21-52 (QEATIDKVHDTPAVRGSIIANMLQEHDNPFTL) the chain is on the periplasmic side. The chain crosses the membrane as a beta stranded span at residues 53–65 (YPYESNYLLYTYT). Residues 66 to 84 (SDLNKKAIESYNWSDNANK) lie on the Extracellular side of the membrane. The beta stranded transmembrane segment at 85-99 (DEVKFQLSLAFPLWR) threads the bilayer. Topologically, residues 100 to 105 (GILGDN) are periplasmic. The chain crosses the membrane as a beta stranded span at residues 106 to 118 (SLLGASYTQRSWW). The Extracellular segment spans residues 119–128 (QLSNTGESAP). Ser-126 is a Ca(2+) binding site. A beta stranded membrane pass occupies residues 129–148 (FRETNYEPQLFLGFATDYSV). Over 149-150 (GD) the chain is Periplasmic. A beta stranded membrane pass occupies residues 151-164 (WTLRDAEFGYNHQS). His-162 functions as the Proton acceptor in the catalytic mechanism. The active-site Nucleophile is Ser-164. Residues 165–173 (NGRSDPTSR) are Extracellular-facing. Positions 167 and 172 each coordinate Ca(2+). The chain crosses the membrane as a beta stranded span at residues 174 to 186 (SWNRLYSRLMAQN). At 187-188 (GN) the chain is on the periplasmic side. Residues 189 to 198 (WLVEVKPWYV) form a beta stranded membrane-spanning segment. Residues 199–216 (IGDTSDNKNITKYMGYYQ) are Extracellular-facing. Asp-204 lines the Ca(2+) pocket. Residues 217-223 (LKIGYQL) form a beta stranded membrane-spanning segment. Residues 224-225 (GE) are Periplasmic-facing. A beta stranded membrane pass occupies residues 226 to 234 (AVLSAKGQY). At 235-241 (NWNTGYG) the chain is on the extracellular side. The beta stranded transmembrane segment at 242 to 250 (GAELGVSYP) threads the bilayer. Residues 251–255 (ITKHV) lie on the Periplasmic side of the membrane. A beta stranded membrane pass occupies residues 256 to 265 (RFYTQVYSGY). At 266–274 (GESLIDYDF) the chain is on the extracellular side. A beta stranded transmembrane segment spans residues 275–286 (NQTRVGMGVMLN). Over 287–289 (DLF) the chain is Periplasmic.

The protein belongs to the phospholipase A1 family. Homodimer; dimerization is reversible, and the dimeric form is the active one. Ca(2+) serves as cofactor.

The protein localises to the cell outer membrane. It catalyses the reaction a 1,2-diacyl-sn-glycero-3-phosphocholine + H2O = a 2-acyl-sn-glycero-3-phosphocholine + a fatty acid + H(+). The catalysed reaction is a 1,2-diacyl-sn-glycero-3-phosphocholine + H2O = a 1-acyl-sn-glycero-3-phosphocholine + a fatty acid + H(+). Functionally, hydrolysis of phosphatidylcholine with phospholipase A2 (EC 3.1.1.4) and phospholipase A1 (EC 3.1.1.32) activities. This Proteus vulgaris protein is Phospholipase A1 (pldA).